The sequence spans 503 residues: Probable cytosol aminopeptidase (503 aa).

Positions 272 and 277 each coordinate Mn(2+). Residue Lys284 is part of the active site. Positions 295, 354, and 356 each coordinate Mn(2+). Residue Arg358 is part of the active site.

Belongs to the peptidase M17 family. Mn(2+) serves as cofactor.

The protein localises to the cytoplasm. The enzyme catalyses Release of an N-terminal amino acid, Xaa-|-Yaa-, in which Xaa is preferably Leu, but may be other amino acids including Pro although not Arg or Lys, and Yaa may be Pro. Amino acid amides and methyl esters are also readily hydrolyzed, but rates on arylamides are exceedingly low.. It carries out the reaction Release of an N-terminal amino acid, preferentially leucine, but not glutamic or aspartic acids.. In terms of biological role, presumably involved in the processing and regular turnover of intracellular proteins. Catalyzes the removal of unsubstituted N-terminal amino acids from various peptides. In Chlorobium limicola (strain DSM 245 / NBRC 103803 / 6330), this protein is Probable cytosol aminopeptidase.